The primary structure comprises 382 residues: Alanine racemase (382 aa).

Catalysis depends on lysine 39, which acts as the Proton acceptor; specific for D-alanine. Lysine 39 carries the post-translational modification N6-(pyridoxal phosphate)lysine. Arginine 138 provides a ligand contact to substrate. Tyrosine 265 serves as the catalytic Proton acceptor; specific for L-alanine. Methionine 312 is a binding site for substrate.

The protein belongs to the alanine racemase family. The cofactor is pyridoxal 5'-phosphate.

The catalysed reaction is L-alanine = D-alanine. The protein operates within amino-acid biosynthesis; D-alanine biosynthesis; D-alanine from L-alanine: step 1/1. Its function is as follows. Catalyzes the interconversion of L-alanine and D-alanine. May also act on other amino acids. The chain is Alanine racemase (alr) from Staphylococcus saprophyticus subsp. saprophyticus (strain ATCC 15305 / DSM 20229 / NCIMB 8711 / NCTC 7292 / S-41).